Here is a 279-residue protein sequence, read N- to C-terminus: Protein CMSS1 (279 aa).

Residues methionine 1–tryptophan 10 are compositionally biased toward acidic residues. The interval methionine 1–proline 89 is disordered. The segment covering asparagine 12–glutamate 22 has biased composition (polar residues). 2 positions are modified to phosphoserine: serine 19 and serine 24. The residue at position 167 (arginine 167) is an Omega-N-methylarginine. Residue threonine 212 is modified to Phosphothreonine.

This sequence belongs to the CMS1 family.

In Homo sapiens (Human), this protein is Protein CMSS1 (CMSS1).